Consider the following 588-residue polypeptide: Synaptotagmin-3 (588 aa).

At 1-54 (MSGDYEDDLCRRALILVSDLCARIRDADTNDRCQEFNELRIRGYPRGPDADISV) the chain is on the vesicular side. A cysteine motif region spans residues 10-34 (CRRALILVSDLCARIRDADTNDRCQ). Residues 55 to 75 (SLLSVIVTFCGIVLLGVSLFV) traverse the membrane as a helical segment. Over 76-588 (SWKLCWVPWR…KGLSEKENSE (513 aa)) the chain is Cytoplasmic. Disordered regions lie at residues 129–161 (GGPH…PEPS), 183–222 (PSQT…VTSL), and 238–257 (QTLT…ALPL). The segment covering 183–205 (PSQTSPELPSEGGTGSGLLLLPP) has biased composition (low complexity). The segment covering 213-222 (AQSHQQVTSL) has biased composition (polar residues). R286 bears the Omega-N-methylarginine mark. 2 consecutive C2 domains span residues 297–418 (PCGR…PLWR) and 429–563 (DLGE…EHWH). Ca(2+)-binding residues include D328, D334, D386, F387, D388, S391, D394, D460, D466, D520, and D522.

This sequence belongs to the synaptotagmin family. As to quaternary structure, homodimer; disulfide-linked via the cysteine motif. Can also form heterodimers with SYT6, SYT9 and SYT10. Ca(2+) serves as cofactor. In terms of tissue distribution, brain, various endocrine tissues and hormone-secreting clonal cells.

The protein localises to the cell membrane. It is found in the cytoplasmic vesicle. The protein resides in the secretory vesicle membrane. In terms of biological role, ca(2+) sensor involved in Ca(2+)-dependent exocytosis of secretory vesicles through Ca(2+) and phospholipid binding to the C2 domain. Ca(2+) induces binding of the C2-domains to phospholipid membranes and to assembled SNARE-complexes; both actions contribute to triggering exocytosis. Plays a role in dendrite formation by melanocytes. This Rattus norvegicus (Rat) protein is Synaptotagmin-3 (Syt3).